The chain runs to 334 residues: Protein-methionine-sulfoxide reductase catalytic subunit MsrP (334 aa).

The segment at residues 1–44 is a signal peptide (tat-type signal); sequence MKKNQFLKESDVTAESVFFMKRRQVLKALGISAAALSLPHAAHA. Mo-molybdopterin contacts are provided by residues Asn88, 91-92, Cys146, Thr181, Asn233, Arg238, and 249-251; these read YE and GIK.

The protein belongs to the MsrP family. Heterodimer of a catalytic subunit (MsrP) and a heme-binding subunit (MsrQ). The cofactor is Mo-molybdopterin. Post-translationally, predicted to be exported by the Tat system. The position of the signal peptide cleavage has not been experimentally proven.

The protein localises to the periplasm. The enzyme catalyses L-methionyl-[protein] + a quinone + H2O = L-methionyl-(S)-S-oxide-[protein] + a quinol. It catalyses the reaction L-methionyl-[protein] + a quinone + H2O = L-methionyl-(R)-S-oxide-[protein] + a quinol. Part of the MsrPQ system that repairs oxidized periplasmic proteins containing methionine sulfoxide residues (Met-O), using respiratory chain electrons. Thus protects these proteins from oxidative-stress damage caused by reactive species of oxygen and chlorine generated by the host defense mechanisms. MsrPQ is essential for the maintenance of envelope integrity under bleach stress, rescuing a wide series of structurally unrelated periplasmic proteins from methionine oxidation, including the primary periplasmic chaperone SurA and the lipoprotein Pal. The catalytic subunit MsrP is non-stereospecific, being able to reduce both (R-) and (S-) diastereoisomers of methionine sulfoxide. This Shigella boydii serotype 18 (strain CDC 3083-94 / BS512) protein is Protein-methionine-sulfoxide reductase catalytic subunit MsrP.